A 256-amino-acid polypeptide reads, in one-letter code: NifU-like protein, mitochondrial (256 aa).

The CxxC motif signature appears at C196–C199.

Belongs to the NifU family. As to quaternary structure, homodimer; in absence of BOL3, probably bridged by an iron-sulfure cluster. Interacts with BOL3. Interacts with apo-target proteins, such as ACO1, LYS4, ACO2 and SDH2.

The protein localises to the mitochondrion matrix. Its function is as follows. Involved in iron homeostasis within the mitochondrion where it is involved in the assembly of iron-sulfur proteins. Together with BOL3, required during the last step of iron-sulfur protein assembly when the iron-sulfur cluster is inserted into the target protein. Required for protecting iron sulfur clusters from oxidative damage. The chain is NifU-like protein, mitochondrial (NFU1) from Saccharomyces cerevisiae (strain ATCC 204508 / S288c) (Baker's yeast).